Reading from the N-terminus, the 540-residue chain is MAVKYIFVTGGVLSSLGKGITSSSIATLLQQSGYSVSILKIDPYINVDPGTMSPLEHGEVFVTCDGAETDLDIGHYERFLNKDFHKKNNFTTGQIYMSVIENERKGKYLGKTIQIVPHIVDEIKSRIKFAGEGSDFLVVELGGTVGDIEGMPYLEAMRQMKHELGGKQVISIHITLIPLMRAAGELKTKPTQHSVQELRRIGISPQILVARCEKNLDKELKRKLALSCDVDNDSVIVAQDTQSIYKCPLNFLEEGILTPIARHLELGELKPKMDNWDMLVKKIIAPKSNITIGFVGKYLSLKESYKSLIESLIHAGANTDTRVNIKWIDSEILVDNLALLYDVDSLLIPGGFGERGIEGKLEAIKYARIQQIPLLGICLGMQLSLIEFARNVLGMSEANSIEFDPQTKEPVIYLIENFIDSQGGVQLRTHTSPMGGTMRLGEYECHIKKGTKLYEAYGKQTLIKERHRHRYEANPHYRALFEKNGMIVSGESNGLIESIELANHPWFVGVQFHPEFTSRLQNPNPVILAFVKETLAHKKT.

The amidoligase domain stretch occupies residues 1–266; it reads MAVKYIFVTG…LTPIARHLEL (266 aa). CTP is bound at residue serine 14. Serine 14 is a binding site for UTP. ATP is bound by residues 15 to 20 and aspartate 72; that span reads SLGKGI. Positions 72 and 140 each coordinate Mg(2+). Residues 147 to 149, 187 to 192, and lysine 223 contribute to the CTP site; these read DIE and KTKPTQ. UTP is bound by residues 187-192 and lysine 223; that span reads KTKPTQ. The Glutamine amidotransferase type-1 domain maps to 291–540; sequence TIGFVGKYLS…VKETLAHKKT (250 aa). L-glutamine is bound at residue glycine 351. Residue cysteine 378 is the Nucleophile; for glutamine hydrolysis of the active site. Residues 379-382, glutamate 402, and arginine 470 contribute to the L-glutamine site; that span reads LGMQ. Catalysis depends on residues histidine 513 and glutamate 515.

This sequence belongs to the CTP synthase family. Homotetramer.

It catalyses the reaction UTP + L-glutamine + ATP + H2O = CTP + L-glutamate + ADP + phosphate + 2 H(+). The enzyme catalyses L-glutamine + H2O = L-glutamate + NH4(+). It carries out the reaction UTP + NH4(+) + ATP = CTP + ADP + phosphate + 2 H(+). The protein operates within pyrimidine metabolism; CTP biosynthesis via de novo pathway; CTP from UDP: step 2/2. Its activity is regulated as follows. Allosterically activated by GTP, when glutamine is the substrate; GTP has no effect on the reaction when ammonia is the substrate. The allosteric effector GTP functions by stabilizing the protein conformation that binds the tetrahedral intermediate(s) formed during glutamine hydrolysis. Inhibited by the product CTP, via allosteric rather than competitive inhibition. Functionally, catalyzes the ATP-dependent amination of UTP to CTP with either L-glutamine or ammonia as the source of nitrogen. Regulates intracellular CTP levels through interactions with the four ribonucleotide triphosphates. The protein is CTP synthase of Helicobacter hepaticus (strain ATCC 51449 / 3B1).